An 81-amino-acid chain; its full sequence is Trefoil factor 1 (81 aa).

Positions 1–23 (MEHRVIYVLVLVCALTLSSLAQG) are cleaved as a signal peptide. Positions 26–69 (ETCTVAPHHRDNCGSPGITPSQCKDKGCCFDNTVRGVPWCYYPV) constitute a P-type domain. 3 disulfides stabilise this stretch: Cys28-Cys54, Cys38-Cys53, and Cys48-Cys65.

It is found in the secreted. Functionally, stabilizer of the mucous gel overlying the gastrointestinal mucosa that provides a physical barrier against various noxious agents. The polypeptide is Trefoil factor 1 (TFF1) (Canis lupus familiaris (Dog)).